We begin with the raw amino-acid sequence, 1074 residues long: Fibrous sheath CABYR-binding protein (1074 aa).

A disordered region spans residues 1–73; it reads MEECEEPEEP…SKDNYSRKEY (73 aa). S25, S57, S186, and S275 each carry phosphoserine. Disordered stretches follow at residues 272–294 and 317–343; these read QAPSPAEETSAAETATTTAKDVV and LVQGALSDKPSDQQYPQGTEMAPSELP. A compositionally biased stretch (low complexity) spans 274–290; that stretch reads PSPAEETSAAETATTTA. S365 is modified (phosphoserine). 2 disordered regions span residues 437–789 and 818–982; these read VSAD…PLES and GVPA…PLKT. The span at 448–467 shows a compositional bias: low complexity; that stretch reads PPSAEDASEEVASSEVLPPS. Residues 528–544 are compositionally biased toward pro residues; that stretch reads VLPPPAEEAPAEVPPPL. The span at 558 to 575 shows a compositional bias: low complexity; that stretch reads EEGPAEVPLAPAEEVPAE. 2 stretches are compositionally biased toward pro residues: residues 576-592 and 673-688; these read FLPPPAEEVPAEVPPPL and PLPPTAERPEEAPPPA. Residues 689-720 show a composition bias toward low complexity; sequence TEEAPVEVLPPATEEAPVEVLPPATEEAPVEV. S1020 carries the phosphoserine modification. The segment at 1026-1054 is disordered; the sequence is SEKELESTTLTSDKMSEGIDSVPEDVSGT.

As to quaternary structure, interacts with CABYR. Interacts with ROPN1 and ROPN1L; the interaction increases upon spermatozoa capacitation conditions. In terms of processing, phosphorylated by PKA upon spermatozoa capacitation conditions. In terms of tissue distribution, expression is restricted to testis and epididymis, expressed by spermatozoa.

Its subcellular location is the cell projection. It is found in the cilium. The protein resides in the flagellum. Functionally, may be involved in the later stages of fibrous sheath biogenesis and spermatozoa capacitation. Inhibits ROPN1 and ROPN1L SUMOylation. Binds calcium. This chain is Fibrous sheath CABYR-binding protein, found in Mus musculus (Mouse).